A 553-amino-acid chain; its full sequence is Flotillin family inner membrane protein YqiK (553 aa).

Residues 1–9 (MDDIVNSVP) are Periplasmic-facing. Residues 10-30 (SWMFTAIIAVCILFIIGIIFA) form a helical membrane-spanning segment. The Cytoplasmic portion of the chain corresponds to 31–553 (RLYRRASAEQ…STTPVEEKAE (523 aa)).

Belongs to the band 7/mec-2 family. Flotillin subfamily. In terms of assembly, homooligomerizes.

The protein resides in the cell inner membrane. Its subcellular location is the membrane raft. Its function is as follows. Found in membrane microdomains that may be equivalent to eukaryotic membrane rafts. FMMs are highly dynamic and increase in number as cells age. Flotillins are thought to be important factors in membrane fluidity. This Escherichia coli (strain K12) protein is Flotillin family inner membrane protein YqiK (yqiK).